Consider the following 194-residue polypeptide: Holliday junction branch migration complex subunit RuvA (194 aa).

Positions 1 to 64 (MISRLTGKLV…EDAHLLFGFA (64 aa)) are domain I. Positions 65–143 (TAEERKTFRQ…AHTVTDGLFA (79 aa)) are domain II. The tract at residues 144–147 (AAPA) is flexible linker. The tract at residues 147–194 (AADETEDIVSTLLALGYSEREAKAAVKGVPEGTDVGEGVRLALKNLLK) is domain III.

Belongs to the RuvA family. Homotetramer. Forms an RuvA(8)-RuvB(12)-Holliday junction (HJ) complex. HJ DNA is sandwiched between 2 RuvA tetramers; dsDNA enters through RuvA and exits via RuvB. An RuvB hexamer assembles on each DNA strand where it exits the tetramer. Each RuvB hexamer is contacted by two RuvA subunits (via domain III) on 2 adjacent RuvB subunits; this complex drives branch migration. In the full resolvosome a probable DNA-RuvA(4)-RuvB(12)-RuvC(2) complex forms which resolves the HJ.

The protein localises to the cytoplasm. In terms of biological role, the RuvA-RuvB-RuvC complex processes Holliday junction (HJ) DNA during genetic recombination and DNA repair, while the RuvA-RuvB complex plays an important role in the rescue of blocked DNA replication forks via replication fork reversal (RFR). RuvA specifically binds to HJ cruciform DNA, conferring on it an open structure. The RuvB hexamer acts as an ATP-dependent pump, pulling dsDNA into and through the RuvAB complex. HJ branch migration allows RuvC to scan DNA until it finds its consensus sequence, where it cleaves and resolves the cruciform DNA. The polypeptide is Holliday junction branch migration complex subunit RuvA (Neisseria meningitidis serogroup C (strain 053442)).